We begin with the raw amino-acid sequence, 79 residues long: Sec-independent protein translocase protein TatA (79 aa).

A helical transmembrane segment spans residues 1 to 21 (MGGFTSIWHWVIVLLVIVLLF). Positions 48-79 (EEEAKNEPKTLDAQVTQAKVHESSEIKNKQEG) are disordered. Over residues 66 to 79 (KVHESSEIKNKQEG) the composition is skewed to basic and acidic residues.

The protein belongs to the TatA/E family. In terms of assembly, the Tat system comprises two distinct complexes: a TatABC complex, containing multiple copies of TatA, TatB and TatC subunits, and a separate TatA complex, containing only TatA subunits. Substrates initially bind to the TatABC complex, which probably triggers association of the separate TatA complex to form the active translocon.

Its subcellular location is the cell inner membrane. In terms of biological role, part of the twin-arginine translocation (Tat) system that transports large folded proteins containing a characteristic twin-arginine motif in their signal peptide across membranes. TatA could form the protein-conducting channel of the Tat system. In Helicobacter acinonychis (strain Sheeba), this protein is Sec-independent protein translocase protein TatA.